The following is a 61-amino-acid chain: Photosystem II reaction center protein K (61 aa).

A propeptide spanning residues 1–24 (MLNIFSLICICLNSALYSSNFFFA) is cleaved from the precursor. A helical transmembrane segment spans residues 40–60 (MPVIPLFFFLLAFVWQAAVSF).

The protein belongs to the PsbK family. PSII is composed of 1 copy each of membrane proteins PsbA, PsbB, PsbC, PsbD, PsbE, PsbF, PsbH, PsbI, PsbJ, PsbK, PsbL, PsbM, PsbT, PsbX, PsbY, PsbZ, Psb30/Ycf12, at least 3 peripheral proteins of the oxygen-evolving complex and a large number of cofactors. It forms dimeric complexes.

It is found in the plastid. The protein resides in the chloroplast thylakoid membrane. Functionally, one of the components of the core complex of photosystem II (PSII). PSII is a light-driven water:plastoquinone oxidoreductase that uses light energy to abstract electrons from H(2)O, generating O(2) and a proton gradient subsequently used for ATP formation. It consists of a core antenna complex that captures photons, and an electron transfer chain that converts photonic excitation into a charge separation. The sequence is that of Photosystem II reaction center protein K from Vitis vinifera (Grape).